Here is a 560-residue protein sequence, read N- to C-terminus: Protein GAT2 (560 aa).

Disordered regions lie at residues 274–297 (RQQE…FSNK), 345–383 (FLST…ISSS), and 412–461 (LNTK…SDEK). The segment covering 347–361 (STSSSSPSPTAGSAP) has biased composition (low complexity). A compositionally biased stretch (basic and acidic residues) spans 369–378 (RQDDPNDKKM). Over residues 414–425 (TKKKNNRGRPRA) the composition is skewed to basic residues. The span at 428 to 456 (RQPTLTTSSHFINNSNPGAAAVSTTTPAA) shows a compositional bias: polar residues. The GATA-type zinc-finger motif lies at 472–497 (CFHCGETETPEWRKGPYGTRTLCNAC).

The polypeptide is Protein GAT2 (GAT2) (Saccharomyces cerevisiae (strain ATCC 204508 / S288c) (Baker's yeast)).